Reading from the N-terminus, the 227-residue chain is MVVGILGTKLGMTQVFEAETGKAIPVTVVEAGPCVVTQIKTEQTDGYTAVQIGYGEAKNKTRQLNTKEPKEVNRYLTNAQEGHLVKSGGTPLRYLREYRVDNTGNFELGQQIKVDLFEAGQLVDVTGKSIGKGFAGYQKRHNFRRGPMAHGSKNHRLPGSTGPGTTPGRVYPGKKMAGHLGNVRVTTRKLKIVRIDPERNLLLIKGSIPGKSGTLISIAPANIVGQK.

Residues 144–166 are disordered; it reads RRGPMAHGSKNHRLPGSTGPGTT.

Belongs to the universal ribosomal protein uL3 family. Part of the 50S ribosomal subunit. Forms a cluster with proteins L14 and L19.

In terms of biological role, one of the primary rRNA binding proteins, it binds directly near the 3'-end of the 23S rRNA, where it nucleates assembly of the 50S subunit. In Trichodesmium erythraeum (strain IMS101), this protein is Large ribosomal subunit protein uL3.